The chain runs to 467 residues: Nodulation protein T (467 aa).

Residues 1-17 form the signal peptide; the sequence is MRFTRYTTPFFSLLLSG. Cys18 is lipidated: N-palmitoyl cysteine. Cys18 is lipidated: S-diacylglycerol cysteine.

The protein belongs to the outer membrane factor (OMF) (TC 1.B.17) family.

The protein localises to the cell membrane. The sequence is that of Nodulation protein T (nodT) from Rhizobium leguminosarum bv. trifolii.